A 534-amino-acid polypeptide reads, in one-letter code: ATP synthase subunit alpha (534 aa).

170 to 177 is a binding site for ATP; that stretch reads GDRQTGKT. The tract at residues 505-534 is disordered; that stretch reads HEDARVKSETAQAAGKDKDEKAAATAGAGK.

The protein belongs to the ATPase alpha/beta chains family. In terms of assembly, F-type ATPases have 2 components, CF(1) - the catalytic core - and CF(0) - the membrane proton channel. CF(1) has five subunits: alpha(3), beta(3), gamma(1), delta(1), epsilon(1). CF(0) has three main subunits: a(1), b(2) and c(9-12). The alpha and beta chains form an alternating ring which encloses part of the gamma chain. CF(1) is attached to CF(0) by a central stalk formed by the gamma and epsilon chains, while a peripheral stalk is formed by the delta and b chains.

Its subcellular location is the cell inner membrane. It catalyses the reaction ATP + H2O + 4 H(+)(in) = ADP + phosphate + 5 H(+)(out). Produces ATP from ADP in the presence of a proton gradient across the membrane. The alpha chain is a regulatory subunit. The chain is ATP synthase subunit alpha from Acidobacterium capsulatum (strain ATCC 51196 / DSM 11244 / BCRC 80197 / JCM 7670 / NBRC 15755 / NCIMB 13165 / 161).